We begin with the raw amino-acid sequence, 169 residues long: UPF0251 protein MM_2090 (169 aa).

It belongs to the UPF0251 family.

This chain is UPF0251 protein MM_2090, found in Methanosarcina mazei (strain ATCC BAA-159 / DSM 3647 / Goe1 / Go1 / JCM 11833 / OCM 88) (Methanosarcina frisia).